The sequence spans 773 residues: DC-STAMP domain-containing protein 2 (773 aa).

The Cytoplasmic segment spans residues 1-26 (MPKVMKDVVHPLGGEEPSMARAVVRS). A helical transmembrane segment spans residues 27–47 (VGGFTLGLSLATAYGLLELLV). Residues 48–51 (EGHS) lie on the Extracellular side of the membrane. A helical transmembrane segment spans residues 52 to 72 (PWGCLVGTLTLAAFLSLGMGF). Topologically, residues 73-233 (SRQVRATVLL…IPQAYHLCYV (161 aa)) are cytoplasmic. Residues 234–254 (LMPFKLALCGLASLVQVFCVI) form a helical membrane-spanning segment. Residues 255-322 (PKYIQPFLRQ…SMKLHRVREA (68 aa)) are Extracellular-facing. 2 N-linked (GlcNAc...) asparagine glycosylation sites follow: Asn284 and Asn296. Residues 323–343 (LALMGFTTPLLLVLLYLQALF) form a helical membrane-spanning segment. The Cytoplasmic portion of the chain corresponds to 344–415 (YRYCYLNWDH…ILETFNLIRH (72 aa)). The chain crosses the membrane as a helical span at residues 416–436 (LLLVLFLVFLDYAVFWVLDLA). At 437–499 (RHQLQGEIVA…LRPSEPDSTG (63 aa)) the chain is on the extracellular side. The N-linked (GlcNAc...) asparagine glycan is linked to Asn480. Residues 500–520 (YIVIGVMYGLCFFITLFGSYV) traverse the membrane as a helical segment. The Cytoplasmic segment spans residues 521 to 773 (SRLRRVICAS…LPDPSHPPPK (253 aa)). Positions 692-701 (SLSMESTSES) are enriched in low complexity. The disordered stretch occupies residues 692 to 773 (SLSMESTSES…LPDPSHPPPK (82 aa)). The segment covering 758 to 773 (PLSPPSLPDPSHPPPK) has biased composition (pro residues).

As to quaternary structure, interacts with DCST1.

Its subcellular location is the cytoplasmic vesicle. The protein resides in the secretory vesicle. It is found in the acrosome membrane. In terms of biological role, essential sperm cell-surface protein required for sperm-egg fusion and fertilization. The sequence is that of DC-STAMP domain-containing protein 2 (DCST2) from Homo sapiens (Human).